We begin with the raw amino-acid sequence, 497 residues long: Cobyric acid synthase (497 aa).

The GATase cobBQ-type domain maps to 251-443 (DLKIGVVWYP…LHGLFDNDFF (193 aa)). The Nucleophile role is filled by Cys333. Residue His435 is part of the active site.

The protein belongs to the CobB/CobQ family. CobQ subfamily.

It functions in the pathway cofactor biosynthesis; adenosylcobalamin biosynthesis. Catalyzes amidations at positions B, D, E, and G on adenosylcobyrinic A,C-diamide. NH(2) groups are provided by glutamine, and one molecule of ATP is hydrogenolyzed for each amidation. The sequence is that of Cobyric acid synthase from Carboxydothermus hydrogenoformans (strain ATCC BAA-161 / DSM 6008 / Z-2901).